The chain runs to 306 residues: Non-specific ribonucleoside hydrolase RihC (306 aa).

Histidine 235 is a catalytic residue.

This sequence belongs to the IUNH family. RihC subfamily.

Functionally, hydrolyzes both purine and pyrimidine ribonucleosides with a broad-substrate specificity. The protein is Non-specific ribonucleoside hydrolase RihC of Salmonella paratyphi B (strain ATCC BAA-1250 / SPB7).